A 923-amino-acid polypeptide reads, in one-letter code: Leucine--tRNA ligase (923 aa).

The 'HIGH' region motif lies at 41-52; it reads PYPSGEGLHVGH. Residues 698 to 702 carry the 'KMSKS' region motif; it reads KMSKS. Lysine 701 provides a ligand contact to ATP.

The protein belongs to the class-I aminoacyl-tRNA synthetase family.

It localises to the cytoplasm. The catalysed reaction is tRNA(Leu) + L-leucine + ATP = L-leucyl-tRNA(Leu) + AMP + diphosphate. The protein is Leucine--tRNA ligase of Amoebophilus asiaticus (strain 5a2).